The primary structure comprises 149 residues: MRAVLQRVTQAHVSVDEEIVGAIGPGLMVLLGVEQGDGPQDAAQLAKKTAELRVFEDAEGKMNRSVEDIGGQLLVVSQFTLAADCRKGRRPGFSRAAAADTANSLYLDYIEQLRQRGLTVATGRFQAMMQVHLVNDGPVTFLLDSHKVF.

Residues 137-138 (GP) carry the Gly-cisPro motif, important for rejection of L-amino acids motif.

The protein belongs to the DTD family. As to quaternary structure, homodimer.

The protein localises to the cytoplasm. The enzyme catalyses glycyl-tRNA(Ala) + H2O = tRNA(Ala) + glycine + H(+). It carries out the reaction a D-aminoacyl-tRNA + H2O = a tRNA + a D-alpha-amino acid + H(+). In terms of biological role, an aminoacyl-tRNA editing enzyme that deacylates mischarged D-aminoacyl-tRNAs. Also deacylates mischarged glycyl-tRNA(Ala), protecting cells against glycine mischarging by AlaRS. Acts via tRNA-based rather than protein-based catalysis; rejects L-amino acids rather than detecting D-amino acids in the active site. By recycling D-aminoacyl-tRNA to D-amino acids and free tRNA molecules, this enzyme counteracts the toxicity associated with the formation of D-aminoacyl-tRNA entities in vivo and helps enforce protein L-homochirality. This chain is D-aminoacyl-tRNA deacylase, found in Syntrophotalea carbinolica (strain DSM 2380 / NBRC 103641 / GraBd1) (Pelobacter carbinolicus).